The chain runs to 438 residues: Protein DJ-1 homolog B (438 aa).

The transit peptide at 1–45 (MASSSLCHRYFNKITVTPFFNTKKLHHYSPRRISLRVNRRSFSIS) directs the protein to the chloroplast. 2 PfpI endopeptidase domains span residues 53 to 220 (KKVL…EQLL) and 258 to 424 (PQIL…EKFY).

Belongs to the peptidase C56 family. As to quaternary structure, homodimer.

Its subcellular location is the plastid. The protein localises to the chloroplast. Its function is as follows. May be involved in oxidative stress response. This is Protein DJ-1 homolog B (DJ1B) from Arabidopsis thaliana (Mouse-ear cress).